The following is a 222-amino-acid chain: Proteoglycan 3 (222 aa).

The signal sequence occupies residues 1–17 (MKQPLILSFLLLGMVSA). A compositionally biased stretch (basic and acidic residues) spans 27-46 (NPKREESLKQEADGSREQGR). Residues 27-100 (NPKREESLKQ…PKEEDTTHFQ (74 aa)) form a disordered region. The segment covering 71–81 (FEDEEAMESDP) has biased composition (acidic residues). Over residues 83 to 97 (ALNKDSACPKEEDTT) the composition is skewed to basic and acidic residues. The region spanning 105 to 221 (CKSCNYVLVR…CKSHLPFICS (117 aa)) is the C-type lectin domain. 2 cysteine pairs are disulfide-bonded: Cys-126–Cys-220 and Cys-197–Cys-212.

In terms of tissue distribution, expressed in bone marrow, spleen, and thymus. Not detected in heart, liver or lung.

In terms of biological role, possesses similar cytotoxic and cytostimulatory activities to PRG2/MBP. The protein is Proteoglycan 3 of Mus musculus (Mouse).